Reading from the N-terminus, the 506-residue chain is Steroid (22S)-hydroxylase (506 aa).

The chain crosses the membrane as a helical span at residues 12-32; it reads LLFFLPFILLALLTFYTTTVA. Residue cysteine 449 coordinates heme.

It belongs to the cytochrome P450 family. Heme serves as cofactor.

Its subcellular location is the membrane. It carries out the reaction a C28-steroid + reduced [NADPH--hemoprotein reductase] + O2 = a (22S)-22-hydroxy C28-steroid + oxidized [NADPH--hemoprotein reductase] + H2O + H(+). The catalysed reaction is campesterol + reduced [NADPH--hemoprotein reductase] + O2 = (22S)-22-hydroxycampesterol + oxidized [NADPH--hemoprotein reductase] + H2O + H(+). The enzyme catalyses campestanol + reduced [NADPH--hemoprotein reductase] + O2 = 6-deoxycathasterone + oxidized [NADPH--hemoprotein reductase] + H2O + H(+). It functions in the pathway plant hormone biosynthesis; brassinosteroid biosynthesis. In terms of biological role, catalyzes the C22-alpha-hydroxylation step in brassinosteroid biosynthesis, which is the rate-limiting step in this biosynthetic pathway. Catalyzes the conversion of campesterol (CR) to (22S)-22-hydroxycampesterol (22-OHCR, 22-hydroxyCR) and of campestanol (CN) to 6-deoxocathasterone (6-deoxoCT). This chain is Steroid (22S)-hydroxylase, found in Oryza sativa subsp. indica (Rice).